The following is a 159-amino-acid chain: Probable chemoreceptor glutamine deamidase CheD 1 (159 aa).

It belongs to the CheD family.

The enzyme catalyses L-glutaminyl-[protein] + H2O = L-glutamyl-[protein] + NH4(+). In terms of biological role, probably deamidates glutamine residues to glutamate on methyl-accepting chemotaxis receptors (MCPs), playing an important role in chemotaxis. This is Probable chemoreceptor glutamine deamidase CheD 1 from Methanosarcina acetivorans (strain ATCC 35395 / DSM 2834 / JCM 12185 / C2A).